The following is a 554-amino-acid chain: 3-(3-hydroxy-phenyl)propionate/3-hydroxycinnamic acid hydroxylase (554 aa).

FAD-binding positions include 17–46 (QVAI…VVEK) and 285–295 (FRIDRVLLAGD).

The protein belongs to the PheA/TfdB FAD monooxygenase family. The cofactor is FAD.

It catalyses the reaction 3-(3-hydroxyphenyl)propanoate + NADH + O2 + H(+) = 3-(2,3-dihydroxyphenyl)propanoate + NAD(+) + H2O. The catalysed reaction is (2E)-3-(3-hydroxyphenyl)prop-2-enoate + NADH + O2 + H(+) = (2E)-3-(2,3-dihydroxyphenyl)prop-2-enoate + NAD(+) + H2O. Its pathway is aromatic compound metabolism; 3-phenylpropanoate degradation. In terms of biological role, catalyzes the insertion of one atom of molecular oxygen into position 2 of the phenyl ring of 3-(3-hydroxyphenyl)propionate (3-HPP) and hydroxycinnamic acid (3HCI). This chain is 3-(3-hydroxy-phenyl)propionate/3-hydroxycinnamic acid hydroxylase, found in Escherichia coli O139:H28 (strain E24377A / ETEC).